The primary structure comprises 809 residues: Sucrose synthase 4 (809 aa).

The interval 275–753 (MIFNVVVVSP…GLQRIYEKYT (479 aa)) is GT-B glycosyltransferase.

The protein belongs to the glycosyltransferase 1 family. Plant sucrose synthase subfamily. As to expression, predominantly expressed in the leaf tissues and in caryopses.

The catalysed reaction is an NDP-alpha-D-glucose + D-fructose = a ribonucleoside 5'-diphosphate + sucrose + H(+). Functionally, sucrose-cleaving enzyme that provides UDP-glucose and fructose for various metabolic pathways. The sequence is that of Sucrose synthase 4 (SUS4) from Oryza sativa subsp. japonica (Rice).